A 603-amino-acid polypeptide reads, in one-letter code: Vacuolar protein sorting-associated protein 33A (603 aa).

The protein belongs to the STXBP/unc-18/SEC1 family. In terms of assembly, probable component of the homotypic fusion and vacuole protein sorting (HOPS) complex consisting of the core class C Vps proteins vps-11, vps-16, vps-18, and which further associates with vps-33.1, vps-39 and vps-41. Interacts with spe-39. As to expression, ubiquitously expressed at high levels in somatic tissues including the pharynx, muscles, hypodermis, neurons, coelomocytes and spermatheca. Expressed in the intestine.

Its subcellular location is the lysosome. The protein localises to the early endosome. It is found in the late endosome. The protein resides in the apical cell membrane. In terms of biological role, plays a role in vesicle-mediated protein trafficking to lysosomal compartments including the endocytic membrane transport pathways. Believed to act as a component of the putative HOPS endosomal tethering complex which is proposed to be involved in the rab-5-to-rab-7 endosome conversion probably implicating sand-1, and via binding SNAREs and SNARE complexes to mediate tethering and docking events during SNARE-mediated membrane fusion. The HOPS complex is proposed to be recruited to rab-7 on the late endosomal membrane and to regulate late endocytic, phagocytic and autophagic traffic towards lysosomes. Within the HOPS complex, contributes to the normal development of gut granules in embryonic and adult intestinal cells. Required for endosome/lysosome fusion. Required for early embryonic development. The polypeptide is Vacuolar protein sorting-associated protein 33A (Caenorhabditis elegans).